The chain runs to 354 residues: Arginase-2, mitochondrial (354 aa).

The transit peptide at Met1 to Ser22 directs the protein to the mitochondrion. Positions 120, 143, 145, and 147 each coordinate Mn(2+). Residues His145 to Asn149, Ser156 to Asn158, and Asp202 each bind substrate. Asp251 and Asp253 together coordinate Mn(2+). 2 residues coordinate substrate: Thr265 and Glu296. The disordered stretch occupies residues Tyr334–Ile354.

This sequence belongs to the arginase family. As to quaternary structure, homotrimer. Mn(2+) serves as cofactor. As to expression, expressed most strongly in kidney and prostate, much less strongly in the brain, skeletal muscle, placenta, lung, mammary gland, macrophage, uterus, testis and gut, but apparently not in the liver, heart and pancreas. Expressed in activated T cells.

It localises to the mitochondrion. It carries out the reaction L-arginine + H2O = urea + L-ornithine. It participates in nitrogen metabolism; urea cycle; L-ornithine and urea from L-arginine: step 1/1. In terms of biological role, may play a role in the regulation of extra-urea cycle arginine metabolism and also in down-regulation of nitric oxide synthesis. Extrahepatic arginase functions to regulate L-arginine bioavailability to nitric oxid synthase (NOS). Arginine metabolism is a critical regulator of innate and adaptive immune responses. Seems to be involved in negative regulation of the survival capacity of activated CD4(+) and CD8(+) T cells. May suppress inflammation-related signaling in asthmatic airway epithelium. May contribute to the immune evasion of H.pylori by restricting M1 macrophage activation and polyamine metabolism. In fetal dendritic cells may play a role in promoting immune suppression and T cell TNF-alpha production during gestation. Regulates RPS6KB1 signaling, which promotes endothelial cell senescence and inflammation and implicates NOS3/eNOS dysfunction. Can inhibit endothelial autophagy independently of its enzymatic activity implicating mTORC2 signaling. Involved in vascular smooth muscle cell senescence and apoptosis independently of its enzymatic activity. Since NOS is found in the penile corpus cavernosum smooth muscle, the clitoral corpus cavernosum and the vagina, arginase-2 plays a role in both male and female sexual arousal. This is Arginase-2, mitochondrial (ARG2) from Homo sapiens (Human).